The chain runs to 169 residues: MEFEKALSILKNLCSENVVEHCLAVSEYAYELALAIKNKGYEVDVELVRLGGLLHDIGRSRTHGIEHGVVGAEILRELGFDEKLALIAERHIGAGITKEEAIELGLPPKDYLPITLEEKIVAHADNLIFGTKRVEIDDVIKKFEKRLGKNHPSIKRIILLNDEINNLLK.

The HD domain occupies 18–130; that stretch reads VVEHCLAVSE…VAHADNLIFG (113 aa).

This is an uncharacterized protein from Methanocaldococcus jannaschii (strain ATCC 43067 / DSM 2661 / JAL-1 / JCM 10045 / NBRC 100440) (Methanococcus jannaschii).